The chain runs to 123 residues: Large ribosomal subunit protein uL18 (123 aa).

The protein belongs to the universal ribosomal protein uL18 family. Part of the 50S ribosomal subunit; part of the 5S rRNA/L5/L18/L25 subcomplex. Contacts the 5S and 23S rRNAs.

This is one of the proteins that bind and probably mediate the attachment of the 5S RNA into the large ribosomal subunit, where it forms part of the central protuberance. In Chlamydia trachomatis serovar L2 (strain ATCC VR-902B / DSM 19102 / 434/Bu), this protein is Large ribosomal subunit protein uL18.